The following is a 128-amino-acid chain: MAFSGKYEFESEKNYDEFMKRLGLPGDVIERGRNFKIITEVQQDGQDFTWSQSYSGGNIMSNKFTIGKECEMQTMGGKKFKATVKMEGGKVVAEFPNYHQTSEVVGDKLVEISTIGDVTYERVSKRLA.

A2 bears the N-acetylalanine mark.

Belongs to the calycin superfamily. Fatty-acid binding protein (FABP) family. Expressed in ovary granulosa and luteal cells.

The protein localises to the cytoplasm. The protein resides in the membrane. Its function is as follows. Binds to bile acids and is involved in enterohepatic bile acid metabolism. Required for efficient apical to basolateral transport of conjugated bile acids in ileal enterocytes. Stimulates gastric acid and pepsinogen secretion. The chain is Gastrotropin (Fabp6) from Mus musculus (Mouse).